A 97-amino-acid chain; its full sequence is Putative pterin-4-alpha-carbinolamine dehydratase (97 aa).

The protein belongs to the pterin-4-alpha-carbinolamine dehydratase family.

The enzyme catalyses (4aS,6R)-4a-hydroxy-L-erythro-5,6,7,8-tetrahydrobiopterin = (6R)-L-erythro-6,7-dihydrobiopterin + H2O. The sequence is that of Putative pterin-4-alpha-carbinolamine dehydratase from Cyanothece sp. (strain PCC 7425 / ATCC 29141).